The sequence spans 154 residues: 6,7-dimethyl-8-ribityllumazine synthase (154 aa).

Residues Phe-22, 56-58 (AFE), and 81-83 (VLI) contribute to the 5-amino-6-(D-ribitylamino)uracil site. 86-87 (ET) contacts (2S)-2-hydroxy-3-oxobutyl phosphate. His-89 serves as the catalytic Proton donor. A 5-amino-6-(D-ribitylamino)uracil-binding site is contributed by Phe-114. Arg-128 contributes to the (2S)-2-hydroxy-3-oxobutyl phosphate binding site.

Belongs to the DMRL synthase family.

The catalysed reaction is (2S)-2-hydroxy-3-oxobutyl phosphate + 5-amino-6-(D-ribitylamino)uracil = 6,7-dimethyl-8-(1-D-ribityl)lumazine + phosphate + 2 H2O + H(+). It functions in the pathway cofactor biosynthesis; riboflavin biosynthesis; riboflavin from 2-hydroxy-3-oxobutyl phosphate and 5-amino-6-(D-ribitylamino)uracil: step 1/2. Catalyzes the formation of 6,7-dimethyl-8-ribityllumazine by condensation of 5-amino-6-(D-ribitylamino)uracil with 3,4-dihydroxy-2-butanone 4-phosphate. This is the penultimate step in the biosynthesis of riboflavin. The protein is 6,7-dimethyl-8-ribityllumazine synthase of Chlamydia abortus (strain DSM 27085 / S26/3) (Chlamydophila abortus).